Consider the following 94-residue polypeptide: Large ribosomal subunit protein uL29 (94 aa).

The disordered stretch occupies residues 66-94 (NPGERKSRVLSRAKRKKKNLARLSAKVKG). The segment covering 73–94 (RVLSRAKRKKKNLARLSAKVKG) has biased composition (basic residues).

Belongs to the universal ribosomal protein uL29 family.

This is Large ribosomal subunit protein uL29 from Leptospira borgpetersenii serovar Hardjo-bovis (strain JB197).